The following is a 344-amino-acid chain: L-erythro-3,5-diaminohexanoate dehydrogenase (344 aa).

It belongs to the KDD family. Homodimer.

The enzyme catalyses (3S,5S)-3,5-diaminohexanoate + NAD(+) + H2O = (5S)-5-amino-3-oxohexanoate + NH4(+) + NADH + H(+). Its pathway is amino-acid degradation; L-lysine degradation via acetate pathway. In terms of biological role, involved in the anaerobic fermentation of lysine. Catalyzes the oxidative deamination of L-erythro-3,5-diaminohexanoate (3,5-DAH) to 3-keto-5-aminohexanoate (KAH). The protein is L-erythro-3,5-diaminohexanoate dehydrogenase of Acetoanaerobium sticklandii (strain ATCC 12662 / DSM 519 / JCM 1433 / CCUG 9281 / NCIMB 10654 / HF) (Clostridium sticklandii).